Here is a 631-residue protein sequence, read N- to C-terminus: DNA mismatch repair protein MutL (631 aa).

A disordered region spans residues 389-423 (GEREASRQAGGQRVQETQMSSYGSGQSGGRGRSYA).

The protein belongs to the DNA mismatch repair MutL/HexB family.

Its function is as follows. This protein is involved in the repair of mismatches in DNA. It is required for dam-dependent methyl-directed DNA mismatch repair. May act as a 'molecular matchmaker', a protein that promotes the formation of a stable complex between two or more DNA-binding proteins in an ATP-dependent manner without itself being part of a final effector complex. This Shewanella loihica (strain ATCC BAA-1088 / PV-4) protein is DNA mismatch repair protein MutL.